Here is a 582-residue protein sequence, read N- to C-terminus: Putative BTB/POZ domain-containing protein At3g08660 (582 aa).

The interval 1 to 21 (MGSDSTLSLPSSSPPCNNRSS) is disordered. One can recognise a BTB domain in the interval 36–103 (GDIIVVVDGE…CYGINFDITA (68 aa)). The 271-residue stretch at 196–466 (EMWTEELSAL…VRVLYTEQLR (271 aa)) folds into the NPH3 domain. Phosphotyrosine is present on Y407. The segment at 558-582 (GGETRQKVNRKSRSVSERKSSRSGR) is disordered. Positions 571–582 (SVSERKSSRSGR) are enriched in basic and acidic residues.

It belongs to the NPH3 family.

The protein operates within protein modification; protein ubiquitination. In terms of biological role, may act as a substrate-specific adapter of an E3 ubiquitin-protein ligase complex (CUL3-RBX1-BTB) which mediates the ubiquitination and subsequent proteasomal degradation of target proteins. In Arabidopsis thaliana (Mouse-ear cress), this protein is Putative BTB/POZ domain-containing protein At3g08660.